Consider the following 758-residue polypeptide: Vitamin K-dependent gamma-carboxylase (758 aa).

The interval 1-29 (MAVHRGSARAAPASDKVQKNKPAQTSGLE) is disordered. Ala-2 carries the N-acetylalanine modification. Residues 2–60 (AVHRGSARAAPASDKVQKNKPAQTSGLEQGSRMARIFGFEWADLSSWQSVVTLLNRPTD) are Cytoplasmic-facing. The helical transmembrane segment at 61–81 (PANLAVFRFLFAFLMLLDIPQ) threads the bilayer. At 82–113 (ERGLSSLDRKYLDGLDVCRFPLLDALRPLPLD) the chain is on the lumenal side. A disulfide bridge connects residues Cys-99 and Cys-450. Residues 114-134 (WMYLVYTIMFLGALGMMLGLW) form a helical membrane-spanning segment. Over 135–136 (YR) the chain is Cytoplasmic. The helical transmembrane segment at 137 to 157 (LSCMLFLLPYWYVFLLDKTSW) threads the bilayer. Over 158 to 292 (NNHSYLYGLL…VSYFHCMNSQ (135 aa)) the chain is Lumenal. A helical transmembrane segment spans residues 293-313 (LFSIGMFPYVMLASSPLFCSA). Residues 314-361 (EWPRKLVARCPKRLQELLPAKAAPRPSASCVYKRARAKAGQKPGLRHH) are Cytoplasmic-facing. A helical membrane pass occupies residues 362-382 (LGTVFTLLYLLEQLFLPYSHF). At 383–758 (LTQGYNNWTN…PDSEHVHSEL (376 aa)) the chain is on the lumenal side. Residues 727–758 (PFEPVDESSASNTDSSDPHPSEPDSEHVHSEL) are disordered. Basic and acidic residues predominate over residues 742-758 (SDPHPSEPDSEHVHSEL).

It belongs to the vitamin K-dependent gamma-carboxylase family. In terms of assembly, monomer. Interacts with CALU.

The protein localises to the endoplasmic reticulum membrane. The enzyme catalyses 4-carboxy-L-glutamyl-[protein] + 2,3-epoxyphylloquinone + H2O + H(+) = phylloquinol + L-glutamyl-[protein] + CO2 + O2. Functionally, mediates the vitamin K-dependent carboxylation of glutamate residues to calcium-binding gamma-carboxyglutamate (Gla) residues with the concomitant conversion of the reduced hydroquinone form of vitamin K to vitamin K epoxide. Catalyzes gamma-carboxylation of various proteins, such as blood coagulation factors (F2, F7, F9 and F10), osteocalcin (BGLAP) or matrix Gla protein (MGP). The polypeptide is Vitamin K-dependent gamma-carboxylase (Ggcx) (Rattus norvegicus (Rat)).